A 382-amino-acid chain; its full sequence is Protein-arginine rhamnosyltransferase (382 aa).

DTDP is bound at residue 18–19 (FG). Asp-20 (proton acceptor) is an active-site residue. DTDP-beta-L-rhamnose is bound by residues Asp-20, Tyr-187, 250–252 (VPQ), and 268–272 (RGEDS). Residues Tyr-187, 250–252 (VPQ), and 268–272 (RGEDS) contribute to the dTDP site. Glu-270 is a catalytic residue.

It belongs to the glycosyltransferase 104 family.

The enzyme catalyses dTDP-beta-L-rhamnose + L-arginyl-[protein] = N(omega)-(alpha-L-rhamnosyl)-L-arginyl-[protein] + dTDP + H(+). Protein-arginine rhamnosyltransferase that catalyzes the transfer of a single rhamnose to elongation factor P (EF-P) on 'Lys-32', a modification required for EF-P-dependent rescue of polyproline stalled ribosomes. This chain is Protein-arginine rhamnosyltransferase, found in Neisseria meningitidis serogroup B / serotype 15 (strain H44/76).